The primary structure comprises 268 residues: Ribosomal RNA large subunit methyltransferase E (268 aa).

Residues 1–60 (MKPPRSRSGSSKDTGPKRIPGKALKSASNPGENDATLDSATARTARNKTVSLRTARGRTT) are disordered. Residues 26–52 (SASNPGENDATLDSATARTARNKTVSL) show a composition bias toward polar residues. S-adenosyl-L-methionine contacts are provided by Gly-115, Trp-117, Asp-133, Asp-149, and Asp-173. Lys-213 functions as the Proton acceptor in the catalytic mechanism.

Belongs to the class I-like SAM-binding methyltransferase superfamily. RNA methyltransferase RlmE family.

The protein localises to the cytoplasm. It carries out the reaction uridine(2552) in 23S rRNA + S-adenosyl-L-methionine = 2'-O-methyluridine(2552) in 23S rRNA + S-adenosyl-L-homocysteine + H(+). Functionally, specifically methylates the uridine in position 2552 of 23S rRNA at the 2'-O position of the ribose in the fully assembled 50S ribosomal subunit. The sequence is that of Ribosomal RNA large subunit methyltransferase E from Gluconobacter oxydans (strain 621H) (Gluconobacter suboxydans).